A 178-amino-acid chain; its full sequence is uncharacterized protein (178 aa).

The helical transmembrane segment at 7 to 29 (FFVIFSILWGSLFLFSIIGSLGT) threads the bilayer.

Its subcellular location is the membrane. This is an uncharacterized protein from Bacillus subtilis (strain 168).